Consider the following 215-residue polypeptide: Small ribosomal subunit protein eS1 (215 aa).

It belongs to the eukaryotic ribosomal protein eS1 family.

This is Small ribosomal subunit protein eS1 from Thermoplasma volcanium (strain ATCC 51530 / DSM 4299 / JCM 9571 / NBRC 15438 / GSS1).